Here is a 603-residue protein sequence, read N- to C-terminus: Threonine--tRNA ligase (603 aa).

The tract at residues 209-500 is catalytic; that stretch reads DHRKLGNEMK…LIEHCAGELP (292 aa). Zn(2+) is bound by residues Cys-301, His-352, and His-477.

It belongs to the class-II aminoacyl-tRNA synthetase family. Homodimer. Zn(2+) is required as a cofactor.

The protein localises to the cytoplasm. The enzyme catalyses tRNA(Thr) + L-threonine + ATP = L-threonyl-tRNA(Thr) + AMP + diphosphate + H(+). Functionally, catalyzes the attachment of threonine to tRNA(Thr) in a two-step reaction: L-threonine is first activated by ATP to form Thr-AMP and then transferred to the acceptor end of tRNA(Thr). Also edits incorrectly charged L-seryl-tRNA(Thr). The protein is Threonine--tRNA ligase of Campylobacter lari (strain RM2100 / D67 / ATCC BAA-1060).